Here is a 476-residue protein sequence, read N- to C-terminus: Protein transport protein Sec61 subunit alpha isoform 2 (476 aa).

Over 1-33 (MGIKFLEVIKPFCAVLPEIQKPERKIQFREKVL) the chain is Cytoplasmic. A helical membrane pass occupies residues 34–53 (WTAITLFIFLVCCQIPLFGI). Over 54-76 (MSSDSADPFYWMRVILASNRGTL) the chain is Lumenal. The helical transmembrane segment at 77 to 96 (MELGISPIVTSGLIMQLLAG) threads the bilayer. The Cytoplasmic portion of the chain corresponds to 97–117 (AKIIEVGDTPKDRALFNGAQK). Residues 118–138 (LFGMIITIGQAIVYVMTGMYG) traverse the membrane as a helical segment. At 139–144 (DPAEMG) the chain is on the lumenal side. Residues 145–165 (AGICLLIIIQLFVAGLIVLLL) form a helical membrane-spanning segment. The Cytoplasmic segment spans residues 166-172 (DELLQKG). A helical membrane pass occupies residues 173–193 (YGLGSGISLFIATNICETIVW). The Lumenal segment spans residues 194 to 240 (KAFSPTTINTGRGTEFEGAVIALFHLLATRTDKVRALREAFYRQNLP). A helical membrane pass occupies residues 241–261 (NLMNLIATVFVFAVVIYFQGF). Topologically, residues 262 to 288 (RVDLPIKSARYRGQYSSYPIKLFYTSN) are cytoplasmic. Residues 289–309 (IPIILQSALVSNLYVISQMLS) traverse the membrane as a helical segment. The Lumenal portion of the chain corresponds to 310–354 (VRFSGNFLVNLLGQWADVSGGGPARSYPVGGLCYYLSPPESMGAI). A helical membrane pass occupies residues 355–375 (FEDPVHVVVYIIFMLGSCAFF). Over 376–420 (SKTWIEVSGSSAKDVAKQLKEQQMVMRGHRDTSMVHELNRYIPTA) the chain is Cytoplasmic. A helical transmembrane segment spans residues 421–441 (AAFGGLCIGALSVLADFLGAI). Over 442–445 (GSGT) the chain is Lumenal. The chain crosses the membrane as a helical span at residues 446–462 (GILLAVTIIYQYFEIFV). At 463–476 (KEQAEVGGMGALFF) the chain is on the cytoplasmic side.

The protein belongs to the SecY/SEC61-alpha family. In terms of assembly, the SEC61 channel-forming translocon complex consists of channel-forming core components SEC61A1, SEC61B and SEC61G and different auxiliary components such as SEC62 and SEC63.

The protein localises to the endoplasmic reticulum membrane. In terms of biological role, component of SEC61 channel-forming translocon complex that mediates transport of signal peptide-containing precursor polypeptides across the endoplasmic reticulum (ER). Forms a ribosome receptor and a gated pore in the ER membrane, both functions required for cotranslational translocation of nascent polypeptides. The polypeptide is Protein transport protein Sec61 subunit alpha isoform 2 (SEC61A2) (Homo sapiens (Human)).